The following is a 483-amino-acid chain: Rhamnulokinase (483 aa).

11–15 (ASSGR) is a binding site for ATP. Residues G79 and 234–236 (HDT) contribute to the substrate site. Catalysis depends on D235, which acts as the Proton acceptor. T257 lines the ATP pocket. N294 contacts substrate. Q302 is a binding site for ATP. The cysteines at positions 352 and 369 are disulfide-linked. ATP is bound at residue G401.

Belongs to the rhamnulokinase family. Mg(2+) is required as a cofactor.

It catalyses the reaction L-rhamnulose + ATP = L-rhamnulose 1-phosphate + ADP + H(+). Its pathway is carbohydrate degradation; L-rhamnose degradation; glycerone phosphate from L-rhamnose: step 2/3. Functionally, involved in the catabolism of L-rhamnose (6-deoxy-L-mannose). Catalyzes the transfer of the gamma-phosphate group from ATP to the 1-hydroxyl group of L-rhamnulose to yield L-rhamnulose 1-phosphate. The chain is Rhamnulokinase from Listeria monocytogenes serotype 4b (strain F2365).